Here is a 217-residue protein sequence, read N- to C-terminus: Small ribosomal subunit protein uS3c (217 aa).

One can recognise a KH type-2 domain in the interval 43–117 (IKNYVQKNKR…KLNIAITRIA (75 aa)).

This sequence belongs to the universal ribosomal protein uS3 family. In terms of assembly, part of the 30S ribosomal subunit.

The protein resides in the plastid. It is found in the chloroplast. The polypeptide is Small ribosomal subunit protein uS3c (rps3) (Platanus occidentalis (Sycamore)).